The primary structure comprises 341 residues: MIDIGIVGGSGYTGGELLRLLSVHPSANVVCVTSRKLAGKPVTSVHQHLRGLLDLRFEAPSPAEIAQRCDVVFTAVPHGTAMDWVPELLDNGAKVIDLSADYRLPVDVFEKTYGIKHRAPRDAVFGLPELHPEVAGASLVGNPGCYPTGATLAIAPLAKAGMVDRVVFDSKSGISGAGAEPTETSHYPNLAENIRCYRVTNHRHVPEIKQELSRLQNDIRISFTPHVIPAVRGILTTAHVFVKDSFQDTIQDREFISKLYSDFYRNAKFVRLVEGVPMLGNVRCSNFCDIGFEIEKNSDRIVVISAIDNLVKGASGQAIQNMNLMMGLDETAGLWFPGGAP.

The active site involves cysteine 145.

The protein belongs to the NAGSA dehydrogenase family. Type 1 subfamily.

It is found in the cytoplasm. The enzyme catalyses N-acetyl-L-glutamate 5-semialdehyde + phosphate + NADP(+) = N-acetyl-L-glutamyl 5-phosphate + NADPH + H(+). It functions in the pathway amino-acid biosynthesis; L-arginine biosynthesis; N(2)-acetyl-L-ornithine from L-glutamate: step 3/4. Its function is as follows. Catalyzes the NADPH-dependent reduction of N-acetyl-5-glutamyl phosphate to yield N-acetyl-L-glutamate 5-semialdehyde. This Methanothrix thermoacetophila (strain DSM 6194 / JCM 14653 / NBRC 101360 / PT) (Methanosaeta thermophila) protein is N-acetyl-gamma-glutamyl-phosphate reductase.